Consider the following 63-residue polypeptide: Large ribosomal subunit protein bL28 (63 aa).

This sequence belongs to the bacterial ribosomal protein bL28 family.

This chain is Large ribosomal subunit protein bL28, found in Acidobacterium capsulatum (strain ATCC 51196 / DSM 11244 / BCRC 80197 / JCM 7670 / NBRC 15755 / NCIMB 13165 / 161).